The primary structure comprises 294 residues: Diaminopimelate epimerase (294 aa).

Residues Asn-11 and Asn-78 each coordinate substrate. Catalysis depends on Cys-87, which acts as the Proton donor. Residues 88–89 (GN), Asn-167, Asn-203, and 221–222 (ER) each bind substrate. Cys-230 (proton acceptor) is an active-site residue. 231–232 (GT) contacts substrate.

The protein belongs to the diaminopimelate epimerase family. Homodimer.

Its subcellular location is the cytoplasm. The enzyme catalyses (2S,6S)-2,6-diaminopimelate = meso-2,6-diaminopimelate. Its pathway is amino-acid biosynthesis; L-lysine biosynthesis via DAP pathway; DL-2,6-diaminopimelate from LL-2,6-diaminopimelate: step 1/1. In terms of biological role, catalyzes the stereoinversion of LL-2,6-diaminopimelate (L,L-DAP) to meso-diaminopimelate (meso-DAP), a precursor of L-lysine and an essential component of the bacterial peptidoglycan. The protein is Diaminopimelate epimerase of Mycobacterium avium (strain 104).